The chain runs to 407 residues: Deacetylase Atu3266 (407 aa).

Zn(2+) contacts are provided by H75, H77, K173, H206, H229, and D289. The residue at position 173 (K173) is an N6-carboxylysine.

Belongs to the metallo-dependent hydrolases superfamily. Atu3266/EF_0837 deacetylase family. In terms of assembly, homohexamer, dimer of trimers. Zn(2+) is required as a cofactor.

Functionally, esterase that catalyzes the deacetylation of acetyl-(R)-mandelate (in vitro). Can also hydrolyze acetyl glycolate, but with lower efficiency. Has very low N-acetyl-D-amino acid deacetylase activity with N-acetyl-D-serine and N-acetyl-D-threonine (in vitro). Theoretical substrate docking studies suggest that other N-acetylated amino acids may optimally occupy the active site and may in fact be the physiological substrates. This chain is Deacetylase Atu3266, found in Agrobacterium fabrum (strain C58 / ATCC 33970) (Agrobacterium tumefaciens (strain C58)).